A 21-amino-acid polypeptide reads, in one-letter code: Tricyclic peptide MS-271 (21 aa).

The segment at residues 1 to 9 (CLGVGSCND) is a cross-link (3-cysteinyl-aspartic acid (Cys-Asp)). Cystine bridges form between cysteine 1–cysteine 13 and cysteine 7–cysteine 19. Tryptophan 21 carries the post-translational modification D-tryptophan.

Functionally, inhibits chicken myosin light chain kinase with an IC(50) of 8 M. Does not inhibit bovine cAMP-dependent protein kinase or rat protein kinase C. Antibacterial activity against the Gram-positive bacteria B.subtilis, E.faecium and S.aureus. No antibacterial activity against the Gram-negative bacteria E.coli, K.pneumoniae, P.aeruginosa, P.vulgaris, S.sonnei and S.typhosa. No antifungal activity against C.albicans. In Streptomyces sp, this protein is Tricyclic peptide MS-271.